The chain runs to 229 residues: ATP synthase subunit a 1 (229 aa).

The next 6 helical transmembrane spans lie at 25–45, 86–106, 111–131, 142–162, 181–201, and 202–222; these read ADAV…SFLA, VATV…PGFF, NINT…VVGI, FCGP…IGHL, LVLI…MMLM, and GVLV…IYIQ.

The protein belongs to the ATPase A chain family. In terms of assembly, F-type ATPases have 2 components, CF(1) - the catalytic core - and CF(0) - the membrane proton channel. CF(1) has five subunits: alpha(3), beta(3), gamma(1), delta(1), epsilon(1). CF(0) has three main subunits: a(1), b(2) and c(9-12). The alpha and beta chains form an alternating ring which encloses part of the gamma chain. CF(1) is attached to CF(0) by a central stalk formed by the gamma and epsilon chains, while a peripheral stalk is formed by the delta and b chains.

Its subcellular location is the cell inner membrane. Functionally, key component of the proton channel; it plays a direct role in the translocation of protons across the membrane. In Pelobacter propionicus (strain DSM 2379 / NBRC 103807 / OttBd1), this protein is ATP synthase subunit a 1.